Consider the following 398-residue polypeptide: Arginine biosynthesis bifunctional protein ArgJ (398 aa).

Substrate is bound by residues Thr148, Lys174, Thr185, Glu271, Asn393, and Thr398. Thr185 acts as the Nucleophile in catalysis.

This sequence belongs to the ArgJ family. As to quaternary structure, heterotetramer of two alpha and two beta chains.

The protein resides in the cytoplasm. It catalyses the reaction N(2)-acetyl-L-ornithine + L-glutamate = N-acetyl-L-glutamate + L-ornithine. The enzyme catalyses L-glutamate + acetyl-CoA = N-acetyl-L-glutamate + CoA + H(+). Its pathway is amino-acid biosynthesis; L-arginine biosynthesis; L-ornithine and N-acetyl-L-glutamate from L-glutamate and N(2)-acetyl-L-ornithine (cyclic): step 1/1. It functions in the pathway amino-acid biosynthesis; L-arginine biosynthesis; N(2)-acetyl-L-ornithine from L-glutamate: step 1/4. Its function is as follows. Catalyzes two activities which are involved in the cyclic version of arginine biosynthesis: the synthesis of N-acetylglutamate from glutamate and acetyl-CoA as the acetyl donor, and of ornithine by transacetylation between N(2)-acetylornithine and glutamate. This is Arginine biosynthesis bifunctional protein ArgJ from Listeria monocytogenes serotype 4b (strain F2365).